A 617-amino-acid polypeptide reads, in one-letter code: Dihydroxy-acid dehydratase (617 aa).

D81 is a Mg(2+) binding site. C122 lines the [2Fe-2S] cluster pocket. 2 residues coordinate Mg(2+): D123 and K124. At K124 the chain carries N6-carboxylysine. C195 serves as a coordination point for [2Fe-2S] cluster. E491 is a Mg(2+) binding site. The active-site Proton acceptor is S517.

The protein belongs to the IlvD/Edd family. As to quaternary structure, homodimer. [2Fe-2S] cluster is required as a cofactor. Mg(2+) serves as cofactor.

The catalysed reaction is (2R)-2,3-dihydroxy-3-methylbutanoate = 3-methyl-2-oxobutanoate + H2O. The enzyme catalyses (2R,3R)-2,3-dihydroxy-3-methylpentanoate = (S)-3-methyl-2-oxopentanoate + H2O. It functions in the pathway amino-acid biosynthesis; L-isoleucine biosynthesis; L-isoleucine from 2-oxobutanoate: step 3/4. It participates in amino-acid biosynthesis; L-valine biosynthesis; L-valine from pyruvate: step 3/4. Functions in the biosynthesis of branched-chain amino acids. Catalyzes the dehydration of (2R,3R)-2,3-dihydroxy-3-methylpentanoate (2,3-dihydroxy-3-methylvalerate) into 2-oxo-3-methylpentanoate (2-oxo-3-methylvalerate) and of (2R)-2,3-dihydroxy-3-methylbutanoate (2,3-dihydroxyisovalerate) into 2-oxo-3-methylbutanoate (2-oxoisovalerate), the penultimate precursor to L-isoleucine and L-valine, respectively. This chain is Dihydroxy-acid dehydratase, found in Buchnera aphidicola subsp. Schizaphis graminum (strain Sg).